A 479-amino-acid polypeptide reads, in one-letter code: Ribosomal RNA small subunit methyltransferase F (479 aa).

Residues 125 to 131 (AAAPGSK), Glu149, Asp176, and Asp194 contribute to the S-adenosyl-L-methionine site. The active-site Nucleophile is Cys247.

Belongs to the class I-like SAM-binding methyltransferase superfamily. RsmB/NOP family.

The protein localises to the cytoplasm. It catalyses the reaction cytidine(1407) in 16S rRNA + S-adenosyl-L-methionine = 5-methylcytidine(1407) in 16S rRNA + S-adenosyl-L-homocysteine + H(+). Its function is as follows. Specifically methylates the cytosine at position 1407 (m5C1407) of 16S rRNA. The sequence is that of Ribosomal RNA small subunit methyltransferase F from Shigella sonnei (strain Ss046).